The sequence spans 178 residues: Ribosome maturation factor RimM (178 aa).

Residues 101 to 178 (TDEYYWYQLV…VMRVEWDADF (78 aa)) form the PRC barrel domain.

It belongs to the RimM family. Binds ribosomal protein uS19.

It localises to the cytoplasm. Its function is as follows. An accessory protein needed during the final step in the assembly of 30S ribosomal subunit, possibly for assembly of the head region. Essential for efficient processing of 16S rRNA. May be needed both before and after RbfA during the maturation of 16S rRNA. It has affinity for free ribosomal 30S subunits but not for 70S ribosomes. This Pseudomonas entomophila (strain L48) protein is Ribosome maturation factor RimM.